The sequence spans 73 residues: UPF0154 protein MG335.1 (73 aa).

The chain crosses the membrane as a helical span at residues 6 to 26; the sequence is LALGLGIPLSLLVGMILGYFI.

The protein belongs to the UPF0154 family.

Its subcellular location is the membrane. In Mycoplasma genitalium (strain ATCC 33530 / DSM 19775 / NCTC 10195 / G37) (Mycoplasmoides genitalium), this protein is UPF0154 protein MG335.1.